The following is a 311-amino-acid chain: Burkholderia TALE-like protein 3 (311 aa).

A Cryptic repeat -1 repeat occupies 19–50 (LSPFECLKIEKHSGGADALEFISNKYDALTQV). The Cryptic repeat 0 repeat unit spans residues 51–83 (LSRADILKIACHDCAAHALQAVLDYEQVFRQRG). Core repeat repeat units lie at residues 84–116 (FARA…NECG), 117–149 (FSQA…NERD), 150–182 (YSGA…CESG), 183–215 (YSGA…CERG), 216–248 (YCRT…CERG), and 249–281 (YSRT…TQAG). The Cryptic repeat +1 repeat unit spans residues 282 to 311 (RSNEDIVNMAARTGAAGQIRKMAAQLSGRQ).

Belongs to the transcription activator-like effector (TALE) family. Bat subfamily.

Its function is as follows. Does not bind DNA, probably because it has too few core repeats. The protein is Burkholderia TALE-like protein 3 of Mycetohabitans rhizoxinica (strain DSM 19002 / CIP 109453 / HKI 454) (Paraburkholderia rhizoxinica).